The primary structure comprises 73 residues: Large ribosomal subunit protein bL28 (73 aa).

The protein belongs to the bacterial ribosomal protein bL28 family.

The polypeptide is Large ribosomal subunit protein bL28 (Anaeromyxobacter dehalogenans (strain 2CP-1 / ATCC BAA-258)).